The primary structure comprises 255 residues: Protein patched homolog 2 (255 aa).

The Extracellular portion of the chain corresponds to Ser-1–Asp-197. N-linked (GlcNAc...) asparagine glycosylation is found at Asn-147 and Asn-175. A helical transmembrane segment spans residues Val-198 to Met-218. Positions Ser-199–Ser-255 constitute an SSD domain. At Leu-219 to Gln-227 the chain is on the cytoplasmic side. The helical transmembrane segment at Gly-228–Leu-248 threads the bilayer. Residues Cys-249–Ser-255 lie on the Extracellular side of the membrane.

It belongs to the patched family. In the eye, detected in neural retina, iris, retinal pigment epithelium, but not in lens.

Its subcellular location is the membrane. May act as a receptor for sonic hedgehog (SHH). The chain is Protein patched homolog 2 (PTC2) from Cynops pyrrhogaster (Japanese fire-bellied newt).